A 126-amino-acid polypeptide reads, in one-letter code: Large ribosomal subunit protein bL20c (126 aa).

Belongs to the bacterial ribosomal protein bL20 family.

Its subcellular location is the plastid. The protein resides in the chloroplast. Functionally, binds directly to 23S ribosomal RNA and is necessary for the in vitro assembly process of the 50S ribosomal subunit. It is not involved in the protein synthesizing functions of that subunit. In Lactuca sativa (Garden lettuce), this protein is Large ribosomal subunit protein bL20c.